A 1001-amino-acid chain; its full sequence is 26S proteasome non-ATPase regulatory subunit 1 homolog B (1001 aa).

At Ala2 the chain carries N-acetylalanine. A Glycyl lysine isopeptide (Lys-Gly) (interchain with G-Cter in ubiquitin) cross-link involves residue Lys166. PC repeat units follow at residues Ser412 to Pro447, Gly452 to Gln485, Gly487 to Glu521, Ala522 to Ile555, Gly557 to Tyr590, Gly591 to Arg626, Thr627 to Arg659, Gly661 to Gln695, Gly696 to Ser736, and Gly739 to Ile771. Disordered stretches follow at residues Ala853–Lys896 and Ser954–Pro1001. A compositionally biased stretch (basic and acidic residues) spans Lys854 to Ala863. At Ser889 the chain carries Phosphoserine. Residues Ser961 to Ala985 are compositionally biased toward low complexity.

Belongs to the proteasome subunit S1 family. Component of the 19S regulatory particle (RP/PA700) base subcomplex of the 26S proteasome. The 26S proteasome is composed of a core protease (CP), known as the 20S proteasome, capped at one or both ends by the 19S regulatory particle (RP/PA700). The RP/PA700 complex is composed of at least 17 different subunits in two subcomplexes, the base and the lid, which form the portions proximal and distal to the 20S proteolytic core, respectively.

Functionally, acts as a regulatory subunit of the 26 proteasome which is involved in the ATP-dependent degradation of ubiquitinated proteins. This chain is 26S proteasome non-ATPase regulatory subunit 1 homolog B (RPN2B), found in Arabidopsis thaliana (Mouse-ear cress).